A 296-amino-acid chain; its full sequence is Nitrogenase iron protein (296 aa).

10-17 (GKGGIGKS) is a binding site for ATP. Residue cysteine 98 participates in [4Fe-4S] cluster binding. Residue arginine 101 is modified to ADP-ribosylarginine; by dinitrogenase reductase ADP-ribosyltransferase. Cysteine 133 provides a ligand contact to [4Fe-4S] cluster.

This sequence belongs to the NifH/BchL/ChlL family. As to quaternary structure, homodimer. It depends on [4Fe-4S] cluster as a cofactor. Post-translationally, the reversible ADP-ribosylation of Arg-101 inactivates the nitrogenase reductase and regulates nitrogenase activity.

It catalyses the reaction N2 + 8 reduced [2Fe-2S]-[ferredoxin] + 16 ATP + 16 H2O = H2 + 8 oxidized [2Fe-2S]-[ferredoxin] + 2 NH4(+) + 16 ADP + 16 phosphate + 6 H(+). Its function is as follows. The key enzymatic reactions in nitrogen fixation are catalyzed by the nitrogenase complex, which has 2 components: the iron protein and the molybdenum-iron protein. This chain is Nitrogenase iron protein, found in Magnetococcus marinus (strain ATCC BAA-1437 / JCM 17883 / MC-1).